The following is a 323-amino-acid chain: Phospho-N-acetylmuramoyl-pentapeptide-transferase (323 aa).

9 helical membrane passes run 3–23 (NILLPLLGGFIITAAFMPALI), 52–72 (MGGLLFIVAIAVMTLLTSWVL), 77–97 (MLPTTWILIFILVLYGALGMW), 121–141 (IVGALILFWVYTHEQLPMALH), 145–165 (IGNWHMSGWYAVFVILWLVGF), 175–195 (LDGLVSGLASIAFAAYGIVAW), 200–220 (INIAIFCFAVVGSLLGFLIFN), 226–248 (IFMGDTGSLALGGALAAVSILLH), and 301–321 (IDLTFWGIGLVTALSGVWVIL).

It belongs to the glycosyltransferase 4 family. MraY subfamily. The cofactor is Mg(2+).

The protein localises to the cell membrane. The enzyme catalyses UDP-N-acetyl-alpha-D-muramoyl-L-alanyl-gamma-D-glutamyl-L-lysyl-D-alanyl-D-alanine + di-trans,octa-cis-undecaprenyl phosphate = Mur2Ac(oyl-L-Ala-gamma-D-Glu-L-Lys-D-Ala-D-Ala)-di-trans,octa-cis-undecaprenyl diphosphate + UMP. The protein operates within cell wall biogenesis; peptidoglycan biosynthesis. Functionally, catalyzes the initial step of the lipid cycle reactions in the biosynthesis of the cell wall peptidoglycan: transfers peptidoglycan precursor phospho-MurNAc-pentapeptide from UDP-MurNAc-pentapeptide onto the lipid carrier undecaprenyl phosphate, yielding undecaprenyl-pyrophosphoryl-MurNAc-pentapeptide, known as lipid I. This is Phospho-N-acetylmuramoyl-pentapeptide-transferase from Levilactobacillus brevis (strain ATCC 367 / BCRC 12310 / CIP 105137 / JCM 1170 / LMG 11437 / NCIMB 947 / NCTC 947) (Lactobacillus brevis).